The primary structure comprises 556 residues: Dihydroxy-acid dehydratase (556 aa).

Aspartate 78 is a binding site for Mg(2+). Cysteine 119 provides a ligand contact to [2Fe-2S] cluster. The Mg(2+) site is built by aspartate 120 and lysine 121. N6-carboxylysine is present on lysine 121. [2Fe-2S] cluster is bound at residue cysteine 195. Residue glutamate 446 participates in Mg(2+) binding. Serine 472 functions as the Proton acceptor in the catalytic mechanism.

This sequence belongs to the IlvD/Edd family. Homodimer. It depends on [2Fe-2S] cluster as a cofactor. Mg(2+) serves as cofactor.

It catalyses the reaction (2R)-2,3-dihydroxy-3-methylbutanoate = 3-methyl-2-oxobutanoate + H2O. It carries out the reaction (2R,3R)-2,3-dihydroxy-3-methylpentanoate = (S)-3-methyl-2-oxopentanoate + H2O. It participates in amino-acid biosynthesis; L-isoleucine biosynthesis; L-isoleucine from 2-oxobutanoate: step 3/4. It functions in the pathway amino-acid biosynthesis; L-valine biosynthesis; L-valine from pyruvate: step 3/4. In terms of biological role, functions in the biosynthesis of branched-chain amino acids. Catalyzes the dehydration of (2R,3R)-2,3-dihydroxy-3-methylpentanoate (2,3-dihydroxy-3-methylvalerate) into 2-oxo-3-methylpentanoate (2-oxo-3-methylvalerate) and of (2R)-2,3-dihydroxy-3-methylbutanoate (2,3-dihydroxyisovalerate) into 2-oxo-3-methylbutanoate (2-oxoisovalerate), the penultimate precursor to L-isoleucine and L-valine, respectively. This is Dihydroxy-acid dehydratase from Desulfatibacillum aliphaticivorans.